The sequence spans 25 residues: Chrysophsin-1 (25 aa).

His-25 is modified (histidine amide).

In terms of tissue distribution, gill. Localized in certain epithelial cells lining the surface of secondary lamellae and eosinophilic granule cell-like cells at the base of secondary lamellae.

It localises to the secreted. In terms of biological role, has antibacterial activity against Gram-positive bacteria B.subtilis ATCC 6633, L.garvieae ATCC 49156 and S.iniae F-8502, and Gram-negative bacteria E.coli WT-2, V.anguillarum ATCC 19264, V.penaeicida KHA, V.harveyi ATCC 14126, V.vulnificus ATCC 33148, A.salmonicida NCMB 1102 and P.putida ATCC 12633. Has hemolytic activity against human red blood cells. Seems to disrupt the membranes by adopting an alpha helical conformation. May play a significant role in innate host defense. The polypeptide is Chrysophsin-1 (Pagrus major (Red sea bream)).